The chain runs to 341 residues: MGHRKLSSPRRGSAGLRPRKRSEELLPSPRSYPEVNLPNPVTLGFVGYKVGMTHIFMIDEDRSSSMFGKEIYVPVTVLETPPIYVLALRAYGLNNRGEHSVMGEVWGDLGDFGKFITRRIRGLKIDKEKKEHQLKDIESNLESVSYFRLLVSTQPHLIPALGKKTPDIVEVQIGGGNTKNQLEYGLKLLGNTLSVRDVFKEGQLMDIIGVTKGHGFQGVIKRYGVQELPRWHKHRKGSRKVGTKGPSLGTPSYVPQPGQMGFHRRTEYNKRILKISDDTKLINPKGGFVRYGLVKNTYLLVQGSTIGSIKRPLFLRYPIRPYSAQLPVPKVTYVDVNSKQG.

Disordered stretches follow at residues 1–31 (MGHRKLSSPRRGSAGLRPRKRSEELLPSPRS) and 234–261 (HRKGSRKVGTKGPSLGTPSYVPQPGQMG).

The protein belongs to the universal ribosomal protein uL3 family. Part of the 50S ribosomal subunit. Forms a cluster with proteins L14 and L24e.

Its function is as follows. One of the primary rRNA binding proteins, it binds directly near the 3'-end of the 23S rRNA, where it nucleates assembly of the 50S subunit. The protein is Large ribosomal subunit protein uL3 of Metallosphaera sedula (strain ATCC 51363 / DSM 5348 / JCM 9185 / NBRC 15509 / TH2).